The sequence spans 143 residues: ATP synthase subunit b', chloroplastic (143 aa).

A helical membrane pass occupies residues 12 to 31 (LPVMGLQVVLLSWLLEQILY).

This sequence belongs to the ATPase B chain family. F-type ATPases have 2 components, F(1) - the catalytic core - and F(0) - the membrane proton channel. F(1) has five subunits: alpha(3), beta(3), gamma(1), delta(1), epsilon(1). F(0) has four main subunits: a(1), b(1), b'(1) and c(10-14). The alpha and beta chains form an alternating ring which encloses part of the gamma chain. F(1) is attached to F(0) by a central stalk formed by the gamma and epsilon chains, while a peripheral stalk is formed by the delta, b and b' chains.

The protein localises to the plastid. Its subcellular location is the chloroplast thylakoid membrane. Its function is as follows. F(1)F(0) ATP synthase produces ATP from ADP in the presence of a proton or sodium gradient. F-type ATPases consist of two structural domains, F(1) containing the extramembraneous catalytic core and F(0) containing the membrane proton channel, linked together by a central stalk and a peripheral stalk. During catalysis, ATP synthesis in the catalytic domain of F(1) is coupled via a rotary mechanism of the central stalk subunits to proton translocation. In terms of biological role, component of the F(0) channel, it forms part of the peripheral stalk, linking F(1) to F(0). The b'-subunit is a diverged and duplicated form of b found in plants and photosynthetic bacteria. This is ATP synthase subunit b', chloroplastic from Cyanidioschyzon merolae (strain NIES-3377 / 10D) (Unicellular red alga).